Consider the following 511-residue polypeptide: Bifunctional purine biosynthesis protein PurH (511 aa).

Positions 1 to 145 (MKKRALVSVS…KNHKFVSVIV (145 aa)) constitute an MGS-like domain.

This sequence belongs to the PurH family.

The enzyme catalyses (6R)-10-formyltetrahydrofolate + 5-amino-1-(5-phospho-beta-D-ribosyl)imidazole-4-carboxamide = 5-formamido-1-(5-phospho-D-ribosyl)imidazole-4-carboxamide + (6S)-5,6,7,8-tetrahydrofolate. It catalyses the reaction IMP + H2O = 5-formamido-1-(5-phospho-D-ribosyl)imidazole-4-carboxamide. The protein operates within purine metabolism; IMP biosynthesis via de novo pathway; 5-formamido-1-(5-phospho-D-ribosyl)imidazole-4-carboxamide from 5-amino-1-(5-phospho-D-ribosyl)imidazole-4-carboxamide (10-formyl THF route): step 1/1. It functions in the pathway purine metabolism; IMP biosynthesis via de novo pathway; IMP from 5-formamido-1-(5-phospho-D-ribosyl)imidazole-4-carboxamide: step 1/1. This chain is Bifunctional purine biosynthesis protein PurH, found in Bacillus cytotoxicus (strain DSM 22905 / CIP 110041 / 391-98 / NVH 391-98).